We begin with the raw amino-acid sequence, 151 residues long: Probable transcriptional regulator syrB2 (151 aa).

A disordered region spans residues methionine 1 to lysine 61. Positions alanine 11–proline 23 are enriched in low complexity. The segment covering alanine 24–lysine 35 has biased composition (basic residues).

The protein belongs to the SyrB family.

In terms of biological role, seems to affect the transcription of cya3. May be negatively autoregulated. In Rhizobium meliloti (strain 1021) (Ensifer meliloti), this protein is Probable transcriptional regulator syrB2 (syrB2).